We begin with the raw amino-acid sequence, 250 residues long: DNA repair protein RecO (250 aa).

This sequence belongs to the RecO family.

Functionally, involved in DNA repair and RecF pathway recombination. This Beijerinckia indica subsp. indica (strain ATCC 9039 / DSM 1715 / NCIMB 8712) protein is DNA repair protein RecO.